Here is a 138-residue protein sequence, read N- to C-terminus: MLIPRKVKHRKQHHPSLRGRAKGGTSVHFGEYGIQALESAYVTNRQIEAARIAMTRHIRRGGKVWINIFPDRPLTKKPAETRMGSGKGSPEWWVAPVKAGRVMFELAGVPEPVAKEALRRAIHKLPMKCKVVKREAGE.

A compositionally biased stretch (basic residues) spans 1 to 21; sequence MLIPRKVKHRKQHHPSLRGRA. Residues 1–22 are disordered; the sequence is MLIPRKVKHRKQHHPSLRGRAK.

The protein belongs to the universal ribosomal protein uL16 family. Part of the 50S ribosomal subunit.

Its function is as follows. Binds 23S rRNA and is also seen to make contacts with the A and possibly P site tRNAs. The polypeptide is Large ribosomal subunit protein uL16 (Thermobifida fusca (strain YX)).